A 1354-amino-acid chain; its full sequence is High molecular weight rhoptry protein 2 (1354 aa).

The signal sequence occupies residues 1 to 20 (MVKLSGIILLSLVWLKLNNS). Intrachain disulfides connect cysteine 50–cysteine 75 and cysteine 220–cysteine 227. The helical transmembrane segment at 716–736 (LIFAAYMLTLVFFIESQIDIS) threads the bilayer. 3 disulfide bridges follow: cysteine 768/cysteine 828, cysteine 848/cysteine 889, and cysteine 924/cysteine 1011.

Component of the RhopH complex. RhopH complex is composed of CLAG3.1/CLAG3.2, RhopH2 and RhopH3 with a 1:1:1 subunit stoichiometry. Interacts with CLAG3.1/CLAG3.2.

It localises to the host cell membrane. The protein resides in the parasitophorous vacuole membrane. The protein localises to the host cytoplasm. It is found in the cytoplasm. Its subcellular location is the cytoplasmic vesicle. It localises to the secretory vesicle. The protein resides in the rhoptry. Its function is as follows. Participates in the formation of new permeability pathways in Plasmodium-infected erythrocytes enabling the uptake of nutrients from the blood plasma. Required for maintaining invasion capacity of merozoites. Required for parasite growth and proliferation. This chain is High molecular weight rhoptry protein 2, found in Plasmodium berghei (strain Anka).